We begin with the raw amino-acid sequence, 228 residues long: Ribosomal RNA small subunit methyltransferase G (228 aa).

Residues G89, L94, V140–E141, and R159 each bind S-adenosyl-L-methionine.

This sequence belongs to the methyltransferase superfamily. RNA methyltransferase RsmG family.

The protein localises to the cytoplasm. The enzyme catalyses guanosine(527) in 16S rRNA + S-adenosyl-L-methionine = N(7)-methylguanosine(527) in 16S rRNA + S-adenosyl-L-homocysteine. Its function is as follows. Specifically methylates the N7 position of guanine in position 527 of 16S rRNA. This chain is Ribosomal RNA small subunit methyltransferase G, found in Burkholderia ambifaria (strain MC40-6).